Here is a 485-residue protein sequence, read N- to C-terminus: tRNA sulfurtransferase (485 aa).

The THUMP domain maps to 61–165; it reads EELIALLQRI…DDKMMLVKAR (105 aa). Residues 183–184, Lys-265, Gly-287, and Gln-296 each bind ATP; that span reads LI. Cys-344 and Cys-456 form a disulfide bridge. The Rhodanese domain occupies 404 to 483; the sequence is LSENEVILDI…FSNVRVFAKK (80 aa). Cys-456 (cysteine persulfide intermediate) is an active-site residue.

This sequence belongs to the ThiI family.

The protein resides in the cytoplasm. The catalysed reaction is [ThiI sulfur-carrier protein]-S-sulfanyl-L-cysteine + a uridine in tRNA + 2 reduced [2Fe-2S]-[ferredoxin] + ATP + H(+) = [ThiI sulfur-carrier protein]-L-cysteine + a 4-thiouridine in tRNA + 2 oxidized [2Fe-2S]-[ferredoxin] + AMP + diphosphate. It catalyses the reaction [ThiS sulfur-carrier protein]-C-terminal Gly-Gly-AMP + S-sulfanyl-L-cysteinyl-[cysteine desulfurase] + AH2 = [ThiS sulfur-carrier protein]-C-terminal-Gly-aminoethanethioate + L-cysteinyl-[cysteine desulfurase] + A + AMP + 2 H(+). It participates in cofactor biosynthesis; thiamine diphosphate biosynthesis. Functionally, catalyzes the ATP-dependent transfer of a sulfur to tRNA to produce 4-thiouridine in position 8 of tRNAs, which functions as a near-UV photosensor. Also catalyzes the transfer of sulfur to the sulfur carrier protein ThiS, forming ThiS-thiocarboxylate. This is a step in the synthesis of thiazole, in the thiamine biosynthesis pathway. The sulfur is donated as persulfide by IscS. This is tRNA sulfurtransferase from Haemophilus influenzae (strain PittEE).